A 21-amino-acid polypeptide reads, in one-letter code: Nigrocin-2HSa (21 aa).

A disulfide bridge connects residues cysteine 15 and cysteine 21.

As to expression, expressed by the skin glands.

It is found in the secreted. Functionally, has antibacterial activity against the Gram-positive bacterium S.aureus ATCC 25923 (MIC=56 uM) and the Gram-negative bacterium E.coli ATCC 25726 (MIC=28 uM). The chain is Nigrocin-2HSa from Odorrana hosii (Hose's rock frog).